The primary structure comprises 433 residues: Pyrimidine-nucleoside phosphorylase (433 aa).

81 to 83 (KHS) lines the phosphate pocket. Residues Gly88 and Thr90 each contribute to the K(+) site. Residues Thr92, 108–110 (KMS), and Thr120 each bind phosphate. Substrate is bound by residues Arg168 and Lys187. Leu243, Ala246, and Glu255 together coordinate K(+).

The protein belongs to the thymidine/pyrimidine-nucleoside phosphorylase family. As to quaternary structure, homodimer. The cofactor is K(+).

The catalysed reaction is uridine + phosphate = alpha-D-ribose 1-phosphate + uracil. It catalyses the reaction thymidine + phosphate = 2-deoxy-alpha-D-ribose 1-phosphate + thymine. The enzyme catalyses 2'-deoxyuridine + phosphate = 2-deoxy-alpha-D-ribose 1-phosphate + uracil. Catalyzes phosphorolysis of the pyrimidine nucleosides uridine, thymidine and 2'-deoxyuridine with the formation of the corresponding pyrimidine base and ribose-1-phosphate. In Bacillus subtilis (strain 168), this protein is Pyrimidine-nucleoside phosphorylase.